Here is a 293-residue protein sequence, read N- to C-terminus: Protein translocase subunit SecF (293 aa).

6 helical membrane passes run 10–30 (ARIFFSITAVVLIVGIVSMFA), 130–150 (VKSAVGAVVLSWVLMIIYITI), 158–178 (LAAIVALIIDVMVTLTWFSVL), 185–205 (SFVAALLTVVGYSVNGTIVVF), 244–264 (LFAVVAIFLFGGETIHNFSFA), and 267–287 (VGFCSGFYTSTFLAGSMWLFF).

Belongs to the SecD/SecF family. SecF subfamily. Forms a complex with SecD. Part of the essential Sec protein translocation apparatus which comprises SecA, SecYEG and auxiliary proteins SecDF. Other proteins may also be involved.

It localises to the cell membrane. Part of the Sec protein translocase complex. Interacts with the SecYEG preprotein conducting channel. SecDF uses the proton motive force (PMF) to complete protein translocation after the ATP-dependent function of SecA. The polypeptide is Protein translocase subunit SecF (Acidaminococcus fermentans (strain ATCC 25085 / DSM 20731 / CCUG 9996 / CIP 106432 / VR4)).